The following is a 586-amino-acid chain: A-type ATP synthase subunit A (586 aa).

Residue 232–239 (GPFGSGKT) participates in ATP binding.

It belongs to the ATPase alpha/beta chains family. Has multiple subunits with at least A(3), B(3), C, D, E, F, H, I and proteolipid K(x).

Its subcellular location is the cell membrane. It catalyses the reaction ATP + H2O + 4 H(+)(in) = ADP + phosphate + 5 H(+)(out). Functionally, component of the A-type ATP synthase that produces ATP from ADP in the presence of a proton gradient across the membrane. The A chain is the catalytic subunit. In Methanococcus vannielii (strain ATCC 35089 / DSM 1224 / JCM 13029 / OCM 148 / SB), this protein is A-type ATP synthase subunit A.